Reading from the N-terminus, the 68-residue chain is Conotoxin ba14a (68 aa).

An N-terminal signal peptide occupies residues 1 to 20 (MKLSVMFIVALVLSLSMTDG). The propeptide occupies 21 to 50 (LPRRAENGGRIFRQHSPDSMDPQTRQIKTR).

Post-translationally, contains 2 disulfide bonds. As to expression, expressed by the venom duct.

Its subcellular location is the secreted. This Conus bayani (Bayan's cone) protein is Conotoxin ba14a.